We begin with the raw amino-acid sequence, 132 residues long: Glycine cleavage system H protein (132 aa).

The region spanning 24 to 106 (TVRVGITDFA…YGAGWLLDVQ (83 aa)) is the Lipoyl-binding domain. Residue lysine 65 is modified to N6-lipoyllysine.

The protein belongs to the GcvH family. In terms of assembly, the glycine cleavage system is composed of four proteins: P, T, L and H. The cofactor is (R)-lipoate.

Functionally, the glycine cleavage system catalyzes the degradation of glycine. The H protein shuttles the methylamine group of glycine from the P protein to the T protein. The chain is Glycine cleavage system H protein from Mycobacterium avium (strain 104).